Reading from the N-terminus, the 853-residue chain is Probable inorganic carbon transporter subunit DabA (853 aa).

Residues 1–21 form a disordered region; it reads MSHANSEETMMNTAVAHPSTS. Positions 7 to 21 are enriched in polar residues; that stretch reads EETMMNTAVAHPSTS. Residues C364, D366, H546, and C561 each coordinate Zn(2+).

It belongs to the inorganic carbon transporter (TC 9.A.2) DabA family. Forms a complex with DabB. It depends on Zn(2+) as a cofactor.

Its subcellular location is the cell inner membrane. Part of an energy-coupled inorganic carbon pump. The polypeptide is Probable inorganic carbon transporter subunit DabA (Methylovorus glucosotrophus (strain SIP3-4)).